Here is an 893-residue protein sequence, read N- to C-terminus: MAVASAAPGSIFWKQLLFSLLVLILFCDACQKISLQVPSHLRAEALVGKVNLKECLQSASLILSSDPDFRILEDGSIYTTHDLVLSSGKSFSILLSDSQGQGQKEIEIILEAGGKKVPKRHMKDAVLRRTKRRWAPIPCSLMENSLGPFPQHVQQVQSDAAQNYTIFYSISGPGVDKEPFNLFFIEKDTGDIFCTRSIDREQYQEFPIYAYATTADGYAPEYPLPLVFKVEDDNDNAPYFENKLTVFTVPENCRTGTSVGKVTAIDLDEPDTLHTRLKYKILQQIPNNPRHFTVHPDTGVITTTTPLLDREKCDTYKLIMEVRDMGGQPFGLFNTGTITISLEDENDNAPYFTETSYTVEVEENRIDVEILRMAVHDHDLPNTPHSRAVYQILQGNENGTFKISTDPNTNEAVLCVVKPLNYEVNRQVVLQIGVLNEAQFAKAVNSKTTTTMCTTVVTVKVKDHDEGPECQPPVKVIQSEDCLPTGTELLGYKAVDPERGTGEGLRYKKIQDEDNWFEINEYTGDLKTVKVLDRESTFVKNNQYNVSVIAFDADGRSCTGTLVVFLEDKNDHPPQIKQEELTICRHDKDYVVLEPTDQDGPDNGPPFQFILDNSASKLWTVETRDGKTAILRGRQDLDYDYYTVPIQIKDRHGASATHILPVRVCDCTIPSECRMPSKLSREAALANVFLGKWAILAMVLGSVLLLCILFTCFCVTVKKTVKKCFPEDVAQQNLIVSNTEGPGEEVMDANIRLPTQTSNVCDTSISVGTLGGQGVKTQQSFEMVKGGYTLDANKGGGHQTLESVKGVTDTGRYTYSDWHNFTQPRLGEKVYLCGQDEEHKLCEDYVRSYSYEGKGSVAGSVGCCSDRQEEEGLDFLDHLEPKFRTLAKTCVKK.

Residues 1–29 (MAVASAAPGSIFWKQLLFSLLVLILFCDA) form the signal peptide. The propeptide occupies 30 to 132 (CQKISLQVPS…KDAVLRRTKR (103 aa)). 5 Cadherin domains span residues 133 to 240 (RWAP…APYF), 241 to 352 (ENKL…APYF), 353 to 470 (TETS…GPEC), 471 to 574 (QPPV…DHPP), and 575 to 682 (QIKQ…LSRE). The Extracellular portion of the chain corresponds to 133 to 692 (RWAPIPCSLM…AALANVFLGK (560 aa)). Asparagine 163 carries N-linked (GlcNAc...) asparagine glycosylation. Residue threonine 383 is modified to Phosphothreonine. N-linked (GlcNAc...) asparagine glycans are attached at residues asparagine 398 and asparagine 545. A helical transmembrane segment spans residues 693–715 (WAILAMVLGSVLLLCILFTCFCV). Over 716-893 (TVKKTVKKCF…RTLAKTCVKK (178 aa)) the chain is Cytoplasmic.

Binds to JUP/plakoglobin. In terms of processing, isoform 1A is phosphorylated on a serine but isoform 1B is not. As to expression, epidermis and weakly in tongue papillae.

The protein localises to the cell membrane. The protein resides in the cell junction. Its subcellular location is the desmosome. In terms of biological role, a component of desmosome cell-cell junctions which are required for positive regulation of cellular adhesion. Required for desmosome adhesion strength between the granular layers of the epidermis, as a result moderates epidermal proliferation and differentiation. Is therefore required to maintain postnatal epidermal barrier function and normal hair follicle morphology into adulthood. The sequence is that of Desmocollin-1 (DSC1) from Bos taurus (Bovine).